Reading from the N-terminus, the 72-residue chain is Translation initiation factor IF-1 (72 aa).

The 72-residue stretch at 1–72 folds into the S1-like domain; that stretch reads MAGNDVIEIE…TKGRITYRHK (72 aa).

This sequence belongs to the IF-1 family. Component of the 30S ribosomal translation pre-initiation complex which assembles on the 30S ribosome in the order IF-2 and IF-3, IF-1 and N-formylmethionyl-tRNA(fMet); mRNA recruitment can occur at any time during PIC assembly.

The protein resides in the cytoplasm. Functionally, one of the essential components for the initiation of protein synthesis. Stabilizes the binding of IF-2 and IF-3 on the 30S subunit to which N-formylmethionyl-tRNA(fMet) subsequently binds. Helps modulate mRNA selection, yielding the 30S pre-initiation complex (PIC). Upon addition of the 50S ribosomal subunit IF-1, IF-2 and IF-3 are released leaving the mature 70S translation initiation complex. The chain is Translation initiation factor IF-1 from Oenococcus oeni (strain ATCC BAA-331 / PSU-1).